The following is an 85-amino-acid chain: uncharacterized protein (85 aa).

This is an uncharacterized protein from Treponema pallidum (strain Nichols).